The following is a 197-amino-acid chain: dITP/XTP pyrophosphatase (197 aa).

9–14 contacts substrate; sequence TNNLNK. Mg(2+) is bound by residues E42 and D71. D71 serves as the catalytic Proton acceptor. Substrate contacts are provided by residues S72, 153-156, K176, and 181-182; these read FGYD and HR.

It belongs to the HAM1 NTPase family. In terms of assembly, homodimer. It depends on Mg(2+) as a cofactor.

It catalyses the reaction XTP + H2O = XMP + diphosphate + H(+). It carries out the reaction dITP + H2O = dIMP + diphosphate + H(+). The catalysed reaction is ITP + H2O = IMP + diphosphate + H(+). Its function is as follows. Pyrophosphatase that catalyzes the hydrolysis of nucleoside triphosphates to their monophosphate derivatives, with a high preference for the non-canonical purine nucleotides XTP (xanthosine triphosphate), dITP (deoxyinosine triphosphate) and ITP. Seems to function as a house-cleaning enzyme that removes non-canonical purine nucleotides from the nucleotide pool, thus preventing their incorporation into DNA/RNA and avoiding chromosomal lesions. The protein is dITP/XTP pyrophosphatase of Leptospira interrogans serogroup Icterohaemorrhagiae serovar copenhageni (strain Fiocruz L1-130).